A 293-amino-acid polypeptide reads, in one-letter code: 4-hydroxy-tetrahydrodipicolinate synthase (293 aa).

Threonine 45 lines the pyruvate pocket. Residue tyrosine 133 is the Proton donor/acceptor of the active site. The active-site Schiff-base intermediate with substrate is lysine 161. Valine 203 serves as a coordination point for pyruvate.

This sequence belongs to the DapA family. In terms of assembly, homotetramer; dimer of dimers.

It localises to the cytoplasm. It carries out the reaction L-aspartate 4-semialdehyde + pyruvate = (2S,4S)-4-hydroxy-2,3,4,5-tetrahydrodipicolinate + H2O + H(+). The protein operates within amino-acid biosynthesis; L-lysine biosynthesis via DAP pathway; (S)-tetrahydrodipicolinate from L-aspartate: step 3/4. Functionally, catalyzes the condensation of (S)-aspartate-beta-semialdehyde [(S)-ASA] and pyruvate to 4-hydroxy-tetrahydrodipicolinate (HTPA). This Exiguobacterium sp. (strain ATCC BAA-1283 / AT1b) protein is 4-hydroxy-tetrahydrodipicolinate synthase.